The sequence spans 130 residues: Small ribosomal subunit protein uS9 (130 aa).

Belongs to the universal ribosomal protein uS9 family.

In Burkholderia cenocepacia (strain HI2424), this protein is Small ribosomal subunit protein uS9.